The chain runs to 212 residues: Large ribosomal subunit protein uL3 (212 aa).

Residues 135-156 (MTHGNSRSHRVPGSIGQNQSPG) are disordered. Gln-153 carries the post-translational modification N5-methylglutamine.

Belongs to the universal ribosomal protein uL3 family. In terms of assembly, part of the 50S ribosomal subunit. Forms a cluster with proteins L14 and L19. Methylated by PrmB.

Its function is as follows. One of the primary rRNA binding proteins, it binds directly near the 3'-end of the 23S rRNA, where it nucleates assembly of the 50S subunit. This Tolumonas auensis (strain DSM 9187 / NBRC 110442 / TA 4) protein is Large ribosomal subunit protein uL3.